Reading from the N-terminus, the 479-residue chain is Preferentially expressed antigen in melanoma-like protein 7 (479 aa).

The stretch at Met96–Tyr124 is one LRR 1; degenerate repeat. An LRR 2; degenerate repeat occupies His179–Gln203. The LRR 3; degenerate repeat unit spans residues Pro204–Lys230. An LRR 4; degenerate repeat occupies Met231–Lys265. LRR repeat units lie at residues Leu266 to Leu291, Glu292 to Lys323, His324 to Val347, Ala348 to Lys375, and Cys376 to Arg400.

Belongs to the PRAME family. In terms of assembly, interacts with UHRF1. As to expression, seems to be specific to pluripotent tissues in the early embryo. Not detected in somatic tissues.

In terms of biological role, promotes maintenance and self-renewal of pluripotent embryonic stem cells (ESCs), downstream of LIF/STAT3. Maintains the pluripotency state of ESCs by repressing DNA methylation through the regulation of UHRF1 stability. Mediates the proteasomal degradation of UHRF1. Is required for the establishment of the blastocyst. The chain is Preferentially expressed antigen in melanoma-like protein 7 from Mus musculus (Mouse).